Here is a 207-residue protein sequence, read N- to C-terminus: Large ribosomal subunit protein uL4 (207 aa).

The interval 48 to 89 (SHKVKNRSEVRGGGRKPWRQKGTGRARQGSIRSPQWRGGGVV) is disordered. Basic residues predominate over residues 60-71 (GGRKPWRQKGTG).

Belongs to the universal ribosomal protein uL4 family. As to quaternary structure, part of the 50S ribosomal subunit.

Its function is as follows. One of the primary rRNA binding proteins, this protein initially binds near the 5'-end of the 23S rRNA. It is important during the early stages of 50S assembly. It makes multiple contacts with different domains of the 23S rRNA in the assembled 50S subunit and ribosome. Forms part of the polypeptide exit tunnel. The protein is Large ribosomal subunit protein uL4 of Bacillus velezensis (strain DSM 23117 / BGSC 10A6 / LMG 26770 / FZB42) (Bacillus amyloliquefaciens subsp. plantarum).